The primary structure comprises 90 residues: FGPGCGPSTFSCTSPQKILPGSSVSFPSGYSSIYLTTESGSASVYLDRPDGFWVGGADSRGCSNFGGFNGNGDSKVGNWGDVPVAAWACN.

Its function is as follows. Lectin specific for core(alpha 1-6)fucosylated N-glycans. Inhibits platelet aggregation. This chain is Hypnin-A3, found in Hypnea japonica (Japanese red alga).